A 1005-amino-acid polypeptide reads, in one-letter code: DNA-directed RNA polymerase subunit beta (1005 aa).

This sequence belongs to the RNA polymerase beta chain family. In plastids the minimal PEP RNA polymerase catalytic core is composed of four subunits: alpha, beta, beta', and beta''. When a (nuclear-encoded) sigma factor is associated with the core the holoenzyme is formed, which can initiate transcription (Potential).

Its subcellular location is the plastid. The protein localises to the apicoplast. It carries out the reaction RNA(n) + a ribonucleoside 5'-triphosphate = RNA(n+1) + diphosphate. In terms of biological role, DNA-dependent RNA polymerase catalyzes the transcription of DNA into RNA using the four ribonucleoside triphosphates as substrates. This Theileria parva (East coast fever infection agent) protein is DNA-directed RNA polymerase subunit beta (rpoB).